The chain runs to 376 residues: Chaperone protein DnaJ (376 aa).

Residues Asp-5–Gly-70 form the J domain. The CR-type zinc-finger motif lies at Gly-137 to Val-215. The Zn(2+) site is built by Cys-150, Cys-153, Cys-167, Cys-170, Cys-189, Cys-192, Cys-203, and Cys-206. CXXCXGXG motif repeat units lie at residues Cys-150–Gly-157, Cys-167–Gly-174, Cys-189–Gly-196, and Cys-203–Gly-210.

It belongs to the DnaJ family. Homodimer. Requires Zn(2+) as cofactor.

The protein resides in the cytoplasm. Participates actively in the response to hyperosmotic and heat shock by preventing the aggregation of stress-denatured proteins and by disaggregating proteins, also in an autonomous, DnaK-independent fashion. Unfolded proteins bind initially to DnaJ; upon interaction with the DnaJ-bound protein, DnaK hydrolyzes its bound ATP, resulting in the formation of a stable complex. GrpE releases ADP from DnaK; ATP binding to DnaK triggers the release of the substrate protein, thus completing the reaction cycle. Several rounds of ATP-dependent interactions between DnaJ, DnaK and GrpE are required for fully efficient folding. Also involved, together with DnaK and GrpE, in the DNA replication of plasmids through activation of initiation proteins. This Nitratidesulfovibrio vulgaris (strain ATCC 29579 / DSM 644 / CCUG 34227 / NCIMB 8303 / VKM B-1760 / Hildenborough) (Desulfovibrio vulgaris) protein is Chaperone protein DnaJ.